A 401-amino-acid polypeptide reads, in one-letter code: Argininosuccinate synthase (401 aa).

ATP is bound by residues 9–17 and alanine 36; that span reads AYSGGLDTS. L-citrulline-binding residues include tyrosine 87 and serine 92. Residue glycine 117 coordinates ATP. Residues threonine 119, asparagine 123, and aspartate 124 each coordinate L-aspartate. L-citrulline is bound at residue asparagine 123. Residues arginine 127, serine 176, serine 185, glutamate 261, and tyrosine 273 each contribute to the L-citrulline site.

This sequence belongs to the argininosuccinate synthase family. Type 1 subfamily. Homotetramer.

It is found in the cytoplasm. It catalyses the reaction L-citrulline + L-aspartate + ATP = 2-(N(omega)-L-arginino)succinate + AMP + diphosphate + H(+). The protein operates within amino-acid biosynthesis; L-arginine biosynthesis; L-arginine from L-ornithine and carbamoyl phosphate: step 2/3. The sequence is that of Argininosuccinate synthase from Syntrophobacter fumaroxidans (strain DSM 10017 / MPOB).